Reading from the N-terminus, the 533-residue chain is uncharacterized protein (533 aa).

Polar residues-rich tracts occupy residues 30-43 (SQQGQISESVVKNH), 79-91 (NAGTQSQNFTHLS), 231-247 (NVKSPVQQHRSFVSSSA), and 254-263 (GRQSNSPNSN). 2 disordered regions span residues 30 to 92 (SQQG…HLSA) and 221 to 274 (SLSP…PGAS). Position 336 is a phosphoserine (Ser-336). Residues 475–510 (HPSLSNSAASPPVSSPGLRRSHIPVHEGLKHTRDGV) form a disordered region. Residues 476 to 490 (PSLSNSAASPPVSSP) show a composition bias toward low complexity. Residues 498–510 (PVHEGLKHTRDGV) are compositionally biased toward basic and acidic residues.

The protein localises to the nucleus. This is an uncharacterized protein from Schizosaccharomyces pombe (strain 972 / ATCC 24843) (Fission yeast).